The following is a 782-amino-acid chain: Coiled-coil alpha-helical rod protein 1 (782 aa).

Basic and acidic residues-rich tracts occupy residues Glu62–Arg74 and Glu208–Leu218. Disordered regions lie at residues Glu62 to Glu82 and Glu177 to Leu218. Coiled-coil stretches lie at residues Glu82 to Arg314, Leu344 to Ser437, and Val498 to Gly691.

It is found in the cytoplasm. The protein resides in the nucleus. Functionally, may be a regulator of keratinocyte proliferation or differentiation. The polypeptide is Coiled-coil alpha-helical rod protein 1 (CCHCR1) (Pan troglodytes (Chimpanzee)).